A 469-amino-acid chain; its full sequence is Ribulose bisphosphate carboxylase large chain (469 aa).

Residue Lys5 is modified to N6,N6,N6-trimethyllysine. Residues Asn114 and Thr164 each contribute to the substrate site. Lys166 acts as the Proton acceptor in catalysis. Residue Lys168 coordinates substrate. Positions 192, 194, and 195 each coordinate Mg(2+). N6-carboxylysine is present on Lys192. The active-site Proton acceptor is His285. The substrate site is built by Arg286, His318, and Ser370.

This sequence belongs to the RuBisCO large chain family. Type I subfamily. Heterohexadecamer of 8 large chains and 8 small chains; disulfide-linked. The disulfide link is formed within the large subunit homodimers. Mg(2+) is required as a cofactor. The disulfide bond which can form in the large chain dimeric partners within the hexadecamer appears to be associated with oxidative stress and protein turnover.

It localises to the plastid. The protein resides in the chloroplast. It catalyses the reaction 2 (2R)-3-phosphoglycerate + 2 H(+) = D-ribulose 1,5-bisphosphate + CO2 + H2O. The catalysed reaction is D-ribulose 1,5-bisphosphate + O2 = 2-phosphoglycolate + (2R)-3-phosphoglycerate + 2 H(+). Functionally, ruBisCO catalyzes two reactions: the carboxylation of D-ribulose 1,5-bisphosphate, the primary event in carbon dioxide fixation, as well as the oxidative fragmentation of the pentose substrate in the photorespiration process. Both reactions occur simultaneously and in competition at the same active site. The chain is Ribulose bisphosphate carboxylase large chain from Calycophyllum candidissimum (Degame lemonwood tree).